Consider the following 312-residue polypeptide: Bifunctional pinoresinol-lariciresinol reductase (312 aa).

Residues glycine 10–glycine 16, arginine 35, and lysine 44 each bind NADP(+). Catalysis depends on lysine 139, which acts as the Proton acceptor. Arginine 143 contacts NADP(+). Histidine 271 serves as a coordination point for substrate.

It belongs to the NmrA-type oxidoreductase family. Isoflavone reductase subfamily. Dimer. In terms of tissue distribution, expressed in young stems, young roots and petioles. In stems, expressed in radial parenchyma cells and in the cambial cells of developing secondary xylem.

It carries out the reaction (+)-lariciresinol + NADP(+) = (+)-pinoresinol + NADPH + H(+). The catalysed reaction is (-)-secoisolariciresinol + NADP(+) = (+)-lariciresinol + NADPH + H(+). Its function is as follows. Reductase involved in lignan biosynthesis. Catalyzes the enantioselective sequential conversion of (+)-pinoresinol into (+)-lariciresinol and of (+)-lariciresinol into (-)-secoisolariciresinol. Abstracts the 4R-hydride from the NADPH cofactor during catalysis. The polypeptide is Bifunctional pinoresinol-lariciresinol reductase (PLR_Fi1) (Forsythia intermedia (Border forsythia)).